We begin with the raw amino-acid sequence, 659 residues long: Protein SCARECROW 1 (659 aa).

Disordered stretches follow at residues 1-33 and 188-285; these read MGSS…ITSL and SDPA…KQRD. Residues 190 to 228 are compositionally biased toward pro residues; that stretch reads PAPPPPPPPSHPALLPPDATAPPPPPTSVAALPPPPPPQ. The segment covering 258-271 has biased composition (low complexity); that stretch reads AAAAAAAAAAALAA. Residues 258 to 289 adopt a coiled-coil conformation; sequence AAAAAAAAAAALAAAKERKEEQRRKQRDEEGL. Positions 272–285 are enriched in basic and acidic residues; sequence AKERKEEQRRKQRD. Positions 282–652 constitute a GRAS domain; that stretch reads KQRDEEGLHL…LCLLTASAWR (371 aa). The leucine repeat I (LRI) stretch occupies residues 289 to 353; the sequence is LHLLTLLLQC…VSSCLGLYAP (65 aa). The short motif at 296–300 is the LxCxE motif element; the sequence is LQCAE. The tract at residues 372 to 437 is VHIID; sequence FQVFNGISPF…GGPPRVRLTG (66 aa). A VHIID motif is present at residues 403 to 407; sequence VHIID. Residues 447 to 479 are leucine repeat II (LRII); sequence ATGKRLSDFADTLGLPFEFCPVADKAGNLDPEK. Residues 488-575 form a PFYRE region; the sequence is VAVHWLRHSL…QQLLSREIRN (88 aa). An SAW region spans residues 578–652; sequence AVGGPARTGD…LCLLTASAWR (75 aa).

This sequence belongs to the GRAS family. As to quaternary structure, interacts with SHR1, but not with SHR2.

The protein resides in the nucleus. Transcription factor required for quiescent center cells specification and maintenance of surrounding stem cells, and for the asymmetric cell division involved in radial pattern formation in roots. Essential for cell division but not differentiation of the ground tissue. Regulates the radial organization of the shoot axial organs. Restricts SHR movment and sequesters it into the nucleus of the endodermis. In Oryza sativa subsp. indica (Rice), this protein is Protein SCARECROW 1 (SCR1).